We begin with the raw amino-acid sequence, 506 residues long: UDP-N-acetylmuramoyl-L-alanyl-D-glutamate--2,6-diaminopimelate ligase (506 aa).

UDP-N-acetyl-alpha-D-muramoyl-L-alanyl-D-glutamate is bound at residue serine 38. Glycine 124 to serine 130 is a binding site for ATP. Residues threonine 166–threonine 167, serine 193, and arginine 201 each bind UDP-N-acetyl-alpha-D-muramoyl-L-alanyl-D-glutamate. Lysine 233 is subject to N6-carboxylysine. Meso-2,6-diaminopimelate-binding positions include arginine 401, aspartate 425 to arginine 428, glycine 477, and glutamate 481. The short motif at aspartate 425 to arginine 428 is the Meso-diaminopimelate recognition motif element.

This sequence belongs to the MurCDEF family. MurE subfamily. Requires Mg(2+) as cofactor. Carboxylation is probably crucial for Mg(2+) binding and, consequently, for the gamma-phosphate positioning of ATP.

It is found in the cytoplasm. The catalysed reaction is UDP-N-acetyl-alpha-D-muramoyl-L-alanyl-D-glutamate + meso-2,6-diaminopimelate + ATP = UDP-N-acetyl-alpha-D-muramoyl-L-alanyl-gamma-D-glutamyl-meso-2,6-diaminopimelate + ADP + phosphate + H(+). The protein operates within cell wall biogenesis; peptidoglycan biosynthesis. Functionally, catalyzes the addition of meso-diaminopimelic acid to the nucleotide precursor UDP-N-acetylmuramoyl-L-alanyl-D-glutamate (UMAG) in the biosynthesis of bacterial cell-wall peptidoglycan. The sequence is that of UDP-N-acetylmuramoyl-L-alanyl-D-glutamate--2,6-diaminopimelate ligase from Leptospira interrogans serogroup Icterohaemorrhagiae serovar copenhageni (strain Fiocruz L1-130).